The following is a 134-amino-acid chain: Transcription factor atoh7 (134 aa).

The tract at residues 1 to 27 (MKPRRPSCADSGSDSDSRDPEKFESAM) is disordered. A compositionally biased stretch (basic and acidic residues) spans 15–27 (SDSRDPEKFESAM). A bHLH domain is found at 28–80 (RRRMAANARERKRMQGLNTAFDRLRKVVPQWGQDKKLSKYETLQMALSYIMAL).

The protein localises to the nucleus. It is found in the perikaryon. The protein resides in the cell projection. Its subcellular location is the axon. Functionally, transcription factor that binds to DNA at the consensus sequence 5'-CAG[GC]TG-3'. Involved in the differentiation of retinal ganglion cells, photoreceptor population and optic nerve development. Required for retinal circadian rhythm photoentrainment. This is Transcription factor atoh7 from Danio rerio (Zebrafish).